The chain runs to 965 residues: MNEEDTDFAWLHNNSAEHLRFLSHRIFIGPIPSNFIHSTSGFFNKRFQNYTKRQICYNVASPNEPPIDFSFLMHKSTDENPDTPSNLDSPSTQNVGSTNNTRASQSLLRRSSSFFRRRHRKNGTHASTDNNPFSESSTLQPQTAERTSQQAVRSAITETTNPSVSVQNSNSTSTSSAAMIIPHRDSQNSLEIAPLISPESQLSSLHPSSSRRHLISTPHVNRGTQFKRSSSCRNSRQPLLSGVDKHLTSNFTDANLIIKQSVVLARIESTFTVLPSDYNDSAAQRVPRKTISPWSQCLLVARQTDVENSIRLDFISKKLRKRLNGDVVHNLDVPHDKSYKSNYLFSVVLSPHQASWNIYNSFDNSMVLWCPYGKNKTLICLLNFQSSLLSFEWISIISRALLFSPRPSLLISVPAFHIHLRLNFPCFKDTTRPHTNETFVTTDDITQLSRTSTLSLSTASPRLVHDLVMKSWDISEDQFVESCLGVLEVNPEWSGIVKTWSKSHTLGLCWRMYDRLEWINSFSSLKYVGLLAAKDLYQLELRPKLHYPNHVTFRDGSKMDEPTPVEGYLIRLTSSTGRKTRYGRMFHKELYFAIFNNFLFAIQPDSVLPLSMLSKSLNLDDKLPFLSNNENDKYVYEFDPFKIANCRASGLNETIDSSVRESFLLLLQAERKRELDMLTIADSFLDLSRVESVCPVEDVEERNIFEITMTNGMKLVFQSYCERTRNLWINKITEVASYWKQRLFLDLQEYHDVRETNINILHIEQSIEPDVACYLNHWEVAGCVASTLIYHYCSMLGCRVIRMQGTLFKKKDALFEKCFAILIPGQLVFFQDATRTKFGKLCTKTHYRKRYSISLKNAFIYTGLSTMDEFARGPNDPQPHISRLPRCYEDGWQSFDRDDMLSFVIWSSGGVDYDLRPHHSVPDTAYGMAKDKLSKPKRFMFLARTRQERDVWAKRISKEINRGHS.

The interval 70–175 (SFLMHKSTDE…VQNSNSTSTS (106 aa)) is disordered. Polar residues predominate over residues 82–101 (DTPSNLDSPSTQNVGSTNNT). Low complexity predominate over residues 102 to 114 (RASQSLLRRSSSF). Residues 124–158 (THASTDNNPFSESSTLQPQTAERTSQQAVRSAITE) are compositionally biased toward polar residues. The segment covering 159–175 (TTNPSVSVQNSNSTSTS) has biased composition (low complexity). 2 PH domains span residues 562–737 (PTPV…EVAS) and 800–961 (VIRM…KEIN).

Belongs to the SPO71 family.

The protein localises to the cytoplasm. It localises to the nucleus. It is found in the prospore membrane. Its function is as follows. May recruit a lipid transfer protein to the forespore membrane during sporulation, thereby aiding forespore membrane formation. Required for meiosis. This Schizosaccharomyces pombe (strain 972 / ATCC 24843) (Fission yeast) protein is Forespore membrane adapter protein MUG56.